Reading from the N-terminus, the 307-residue chain is Glutaminase (307 aa).

Substrate contacts are provided by Ser-66, Asn-116, Glu-160, Asn-167, Tyr-191, Tyr-243, and Val-261.

Belongs to the glutaminase family. In terms of assembly, homotetramer.

The enzyme catalyses L-glutamine + H2O = L-glutamate + NH4(+). This chain is Glutaminase, found in Pseudoalteromonas translucida (strain TAC 125).